We begin with the raw amino-acid sequence, 231 residues long: DNA mismatch repair protein MutH (231 aa).

It belongs to the MutH family.

The protein resides in the cytoplasm. In terms of biological role, sequence-specific endonuclease that cleaves unmethylated GATC sequences. It is involved in DNA mismatch repair. In Salmonella enteritidis PT4 (strain P125109), this protein is DNA mismatch repair protein MutH.